The chain runs to 162 residues: Putative 4-hydroxy-4-methyl-2-oxoglutarate aldolase (162 aa).

Substrate-binding positions include glycine 75 to leucine 78 and arginine 97. An a divalent metal cation-binding site is contributed by aspartate 98.

This sequence belongs to the class II aldolase/RraA-like family. In terms of assembly, homotrimer. A divalent metal cation is required as a cofactor.

The catalysed reaction is 4-hydroxy-4-methyl-2-oxoglutarate = 2 pyruvate. The enzyme catalyses oxaloacetate + H(+) = pyruvate + CO2. Catalyzes the aldol cleavage of 4-hydroxy-4-methyl-2-oxoglutarate (HMG) into 2 molecules of pyruvate. Also contains a secondary oxaloacetate (OAA) decarboxylase activity due to the common pyruvate enolate transition state formed following C-C bond cleavage in the retro-aldol and decarboxylation reactions. The protein is Putative 4-hydroxy-4-methyl-2-oxoglutarate aldolase of Pseudomonas aeruginosa (strain LESB58).